The sequence spans 185 residues: Serine/arginine-rich splicing factor RSZ21 (185 aa).

Positions 2–73 constitute an RRM domain; the sequence is ARLYVGNLDP…WRVELSRNSS (72 aa). Residues 86–103 form a CCHC-type zinc finger; it reads MKCYECGETGHFARECRL. Residues 104–185 are disordered; that stretch reads RIGPGGLGSG…DGGRYRRSRS (82 aa). The segment covering 113 to 123 has biased composition (basic residues); it reads GKRRSRSRSRS. Low complexity-rich tracts occupy residues 124–138 and 151–162; these read RSPQ…GRRS and VSPVRGRSYSRS.

Belongs to the splicing factor SR family. In terms of processing, extensively phosphorylated on serine residues in the RS domain. Expressed in roots, leaves and immature seeds.

The protein localises to the nucleus. Involved in pre-mRNA splicing. This Oryza sativa subsp. japonica (Rice) protein is Serine/arginine-rich splicing factor RSZ21 (RSZP21).